Here is a 472-residue protein sequence, read N- to C-terminus: MAAQTLYDKLWESHVVRTDPDGTSLLYIDRHLVHEVTSPQAFEGLKLAGRKPWRVHSIVATADHNTPTDNWDLGIAGIKDPVSRLQVETLDANVRETGALAYFPFMDRNQGIVHVVGPEQGATLPGMTVVCGDSHTSTHGAFAALAHGIGTSEVEHVMATQCLTAKKSKAMLVRVEGELQAGVTAKDIALAVIGRIGTAGGTGYAIEFAGSAIRGLSMEGRMTLCNMAIEAGARSGLVAVDQVTLDYVKGRPFAPTAEQWEAAVACWRELKSDEGAVFDAVVELDATTIAPQVTWGTSPEMVVAITDRVPDPAAEADPVKREGMQRALAYMGLTAGTPMAEIAVDKVFVGSCTNSRIEDLREAAAVVRGRRKADSVRLAMVVPGSGNVKAEAEAEGLDKIFVAAGFEWREPGCSMCLAMNADRLEPGERCASTSNRNFEGRQGQGGRTHLVSPAMAAAAAIAGHFVDIRKGY.

Residues Cys-352, Cys-413, and Cys-416 each contribute to the [4Fe-4S] cluster site.

Belongs to the aconitase/IPM isomerase family. LeuC type 1 subfamily. As to quaternary structure, heterodimer of LeuC and LeuD. Requires [4Fe-4S] cluster as cofactor.

The enzyme catalyses (2R,3S)-3-isopropylmalate = (2S)-2-isopropylmalate. It participates in amino-acid biosynthesis; L-leucine biosynthesis; L-leucine from 3-methyl-2-oxobutanoate: step 2/4. Its function is as follows. Catalyzes the isomerization between 2-isopropylmalate and 3-isopropylmalate, via the formation of 2-isopropylmaleate. The protein is 3-isopropylmalate dehydratase large subunit of Laribacter hongkongensis (strain HLHK9).